A 326-amino-acid polypeptide reads, in one-letter code: GATA zinc finger domain-containing protein 21 (326 aa).

Disordered regions lie at residues 1–102 and 145–238; these read MFRN…NNNN and QNQS…TPER. 2 stretches are compositionally biased toward low complexity: residues 17–102 and 148–164; these read NTNL…NNNN and SSSSSSGASGSRSGSSA. The segment covering 165 to 189 has biased composition (polar residues); it reads LNSINNNNYSPTTSSLNRVRNQYNQ. Over residues 193 to 218 the composition is skewed to acidic residues; the sequence is DEEDDDYDNGAEDGFDYDGDDNEDGS. The segment at 239–266 adopts a GATA-type zinc-finger fold; that stretch reads CSNCKITHSSYWRRITVNGQKLDFCNAC. The tract at residues 277–326 is disordered; the sequence is IKESKQRHSIQNIMNQNQEEEEEEREEEEEEEEEEDEEFETLEEEEEDDE. Positions 294–326 are enriched in acidic residues; that stretch reads QEEEEEEREEEEEEEEEEDEEFETLEEEEEDDE.

This is GATA zinc finger domain-containing protein 21 (gtaU) from Dictyostelium discoideum (Social amoeba).